Here is a 1411-residue protein sequence, read N- to C-terminus: DNA-directed RNA polymerase subunit beta' (1411 aa).

Residues cysteine 69, cysteine 71, cysteine 84, and cysteine 87 each coordinate Zn(2+). Residues aspartate 461, aspartate 463, and aspartate 465 each contribute to the Mg(2+) site. Positions 809, 883, 890, and 893 each coordinate Zn(2+).

The protein belongs to the RNA polymerase beta' chain family. As to quaternary structure, the RNAP catalytic core consists of 2 alpha, 1 beta, 1 beta' and 1 omega subunit. When a sigma factor is associated with the core the holoenzyme is formed, which can initiate transcription. It depends on Mg(2+) as a cofactor. Requires Zn(2+) as cofactor.

The enzyme catalyses RNA(n) + a ribonucleoside 5'-triphosphate = RNA(n+1) + diphosphate. In terms of biological role, DNA-dependent RNA polymerase catalyzes the transcription of DNA into RNA using the four ribonucleoside triphosphates as substrates. The polypeptide is DNA-directed RNA polymerase subunit beta' (Ehrlichia ruminantium (strain Welgevonden)).